A 750-amino-acid chain; its full sequence is Photosystem I P700 chlorophyll a apoprotein A1 (750 aa).

Helical transmembrane passes span 70-93, 156-179, 195-219, 291-309, 346-369, 385-411, 433-455, and 531-549; these read VFSAHFGQLSIIFLWLSGMYFHGA, LYCTAIGALVFAALMLFAGWFHYH, LNHHLAGLLGLGSLSWAGHQVHVSL, IAHHHLAIAILFLIAGHMY, WHAQLSLNLAMLGSLTIVVAHHMY, LSLFTHHMWIGGFLIVGAAAHAAIFMV, AIISHLNWVCIFLGFHSFGLYIH, and FLVHHIHAFTIHVTVLILL. The [4Fe-4S] cluster site is built by C573 and C582. A run of 2 helical transmembrane segments spans residues 589-610 and 664-686; these read HVFLGLFWMYNAISVVIFHFSW and LSAYGLFFLGAHFVWAFSLMFLF. Position 675 (H675) interacts with chlorophyll a'. Positions 683 and 691 each coordinate chlorophyll a. Residue W692 participates in phylloquinone binding. The chain crosses the membrane as a helical span at residues 724–744; the sequence is AVGVTHYLLGGIATTWAFFLA.

Belongs to the PsaA/PsaB family. In terms of assembly, the PsaA/B heterodimer binds the P700 chlorophyll special pair and subsequent electron acceptors. PSI consists of a core antenna complex that captures photons, and an electron transfer chain that converts photonic excitation into a charge separation. The eukaryotic PSI reaction center is composed of at least 11 subunits. The cofactor is P700 is a chlorophyll a/chlorophyll a' dimer, A0 is one or more chlorophyll a, A1 is one or both phylloquinones and FX is a shared 4Fe-4S iron-sulfur center..

The protein localises to the plastid. It localises to the chloroplast thylakoid membrane. The catalysed reaction is reduced [plastocyanin] + hnu + oxidized [2Fe-2S]-[ferredoxin] = oxidized [plastocyanin] + reduced [2Fe-2S]-[ferredoxin]. In terms of biological role, psaA and PsaB bind P700, the primary electron donor of photosystem I (PSI), as well as the electron acceptors A0, A1 and FX. PSI is a plastocyanin-ferredoxin oxidoreductase, converting photonic excitation into a charge separation, which transfers an electron from the donor P700 chlorophyll pair to the spectroscopically characterized acceptors A0, A1, FX, FA and FB in turn. Oxidized P700 is reduced on the lumenal side of the thylakoid membrane by plastocyanin. This chain is Photosystem I P700 chlorophyll a apoprotein A1, found in Nasturtium officinale (Watercress).